The sequence spans 750 residues: Penicillin-binding protein 2x (750 aa).

Residues 29-49 (LSLLSVFVFAIFLVNFAVIIG) traverse the membrane as a helical segment. The active-site Acyl-ester intermediate is serine 337. PASTA domains follow at residues 632 to 691 (QQSP…ILSD) and 692 to 750 (KAEE…TLGD).

It belongs to the transpeptidase family.

The protein resides in the cell membrane. Functionally, a transpeptidase that forms peptide cross-links between adjacent glycan strands in cell wall peptidoglycan (PG). Part of the divisome machinery that synthesizes the septal cross wall. Beta-lactams inactivate the PBPs by acylating an essential serine residue in the active site of these proteins. This is Penicillin-binding protein 2x (pbpX) from Streptococcus pneumoniae serotype 4 (strain ATCC BAA-334 / TIGR4).